The primary structure comprises 218 residues: Cytochrome b6 (218 aa).

Residues 35–55 (IFYCLGGITLVCFLIQFATGF) traverse the membrane as a helical segment. Residue cysteine 38 coordinates heme c. Residues histidine 89 and histidine 103 each coordinate heme b. The next 3 membrane-spanning stretches (helical) occupy residues 93–113 (ASMM…TGGF), 119–139 (LTWV…VTGY), and 189–209 (LHTF…FLMI). Heme b is bound by residues histidine 190 and histidine 205.

It belongs to the cytochrome b family. PetB subfamily. In terms of assembly, the 4 large subunits of the cytochrome b6-f complex are cytochrome b6, subunit IV (17 kDa polypeptide, PetD), cytochrome f and the Rieske protein, while the 4 small subunits are PetG, PetL, PetM and PetN. The complex functions as a dimer. It depends on heme b as a cofactor. Heme c serves as cofactor.

The protein localises to the cellular thylakoid membrane. Its function is as follows. Component of the cytochrome b6-f complex, which mediates electron transfer between photosystem II (PSII) and photosystem I (PSI), cyclic electron flow around PSI, and state transitions. This chain is Cytochrome b6, found in Prochlorococcus marinus (strain MIT 9215).